A 689-amino-acid polypeptide reads, in one-letter code: Glycine--tRNA ligase beta subunit (689 aa).

It belongs to the class-II aminoacyl-tRNA synthetase family. In terms of assembly, tetramer of two alpha and two beta subunits.

Its subcellular location is the cytoplasm. The catalysed reaction is tRNA(Gly) + glycine + ATP = glycyl-tRNA(Gly) + AMP + diphosphate. This chain is Glycine--tRNA ligase beta subunit, found in Coxiella burnetii (strain Dugway 5J108-111).